A 126-amino-acid chain; its full sequence is Large ribosomal subunit protein uL22 (126 aa).

It belongs to the universal ribosomal protein uL22 family. As to quaternary structure, part of the 50S ribosomal subunit.

This protein binds specifically to 23S rRNA; its binding is stimulated by other ribosomal proteins, e.g. L4, L17, and L20. It is important during the early stages of 50S assembly. It makes multiple contacts with different domains of the 23S rRNA in the assembled 50S subunit and ribosome. In terms of biological role, the globular domain of the protein is located near the polypeptide exit tunnel on the outside of the subunit, while an extended beta-hairpin is found that lines the wall of the exit tunnel in the center of the 70S ribosome. The chain is Large ribosomal subunit protein uL22 from Rhodospirillum rubrum (strain ATCC 11170 / ATH 1.1.1 / DSM 467 / LMG 4362 / NCIMB 8255 / S1).